Reading from the N-terminus, the 572-residue chain is Phosphoenolpyruvate-protein phosphotransferase (572 aa).

His191 functions as the Tele-phosphohistidine intermediate in the catalytic mechanism. Phosphoenolpyruvate contacts are provided by Arg298 and Arg334. Mg(2+)-binding residues include Glu433 and Asp457. Phosphoenolpyruvate contacts are provided by residues 456–457 (ND) and Arg467. Catalysis depends on Cys504, which acts as the Proton donor.

The protein belongs to the PEP-utilizing enzyme family. Homodimer. Mg(2+) is required as a cofactor.

Its subcellular location is the cytoplasm. It carries out the reaction L-histidyl-[protein] + phosphoenolpyruvate = N(pros)-phospho-L-histidyl-[protein] + pyruvate. In terms of biological role, general (non sugar-specific) component of the phosphoenolpyruvate-dependent sugar phosphotransferase system (sugar PTS). This major carbohydrate active-transport system catalyzes the phosphorylation of incoming sugar substrates concomitantly with their translocation across the cell membrane. Enzyme I transfers the phosphoryl group from phosphoenolpyruvate (PEP) to the phosphoryl carrier protein (HPr). The chain is Phosphoenolpyruvate-protein phosphotransferase (ptsI) from Staphylococcus aureus (strain MRSA252).